A 55-amino-acid chain; its full sequence is Large ribosomal subunit protein bL33 (55 aa).

Basic and acidic residues predominate over residues 1–10; the sequence is MAKGGREKIK. Residues 1 to 27 are disordered; sequence MAKGGREKIKLQSTAGTGHFYTTDKNK.

The protein belongs to the bacterial ribosomal protein bL33 family.

This is Large ribosomal subunit protein bL33 from Polaromonas naphthalenivorans (strain CJ2).